Here is a 299-residue protein sequence, read N- to C-terminus: Kruppel-like factor 2 (299 aa).

Disordered regions lie at residues 19–38 (YQNAHHQHHQQHYHQQSHHH) and 146–189 (YSFS…RRDK). A compositionally biased stretch (basic residues) spans 23-38 (HHQHHQQHYHQQSHHH). The segment covering 153–180 (SGKDEEDPRIPLKDRGRVYHPQSTEKPK) has biased composition (basic and acidic residues). 3 consecutive C2H2-type zinc fingers follow at residues 198–222 (HKCFYQGCGKVYTKSSHLTAHERVH), 228–252 (YPCEWPGCSWRFARSDELTRHYRKH), and 258–280 (FACKECSRKFSRSDHLQLHMKRH).

This sequence belongs to the krueppel C2H2-type zinc-finger protein family. As to expression, expressed predominantly in intestine.

The protein localises to the nucleus. Probable transcription factor which regulates lipid metabolism. This Caenorhabditis elegans protein is Kruppel-like factor 2.